Consider the following 232-residue polypeptide: MDKSEQDQLKKEAATKAAMMVESGSVLGVGTGSTVAFFIDALGERKEKENFSLKHIVTTSNRSKKQLEGLGFQVDELADIDQADLTVDGADRVDDNLDGIKGGGGALTLEKNVAINSKKVIWIVDESKLVHHLSGFPLPVEVLPVSAEQNFKRFEEEGLKPQWRLDDNGKRYVTHYGNYIIDLAADPTPVPHGLADYLDHTVGVVEHGLFLDMCDEVIIAHSDGTIEDKKRK.

Substrate contacts are provided by residues 31–34 (TGST), 88–91 (DGAD), and 101–104 (KGGG). The active-site Proton acceptor is the Glu-110. Lys-128 is a binding site for substrate.

The protein belongs to the ribose 5-phosphate isomerase family. In terms of assembly, homodimer.

The catalysed reaction is aldehydo-D-ribose 5-phosphate = D-ribulose 5-phosphate. The protein operates within carbohydrate degradation; pentose phosphate pathway; D-ribose 5-phosphate from D-ribulose 5-phosphate (non-oxidative stage): step 1/1. In terms of biological role, catalyzes the reversible conversion of ribose-5-phosphate to ribulose 5-phosphate. This Lactobacillus gasseri (strain ATCC 33323 / DSM 20243 / BCRC 14619 / CIP 102991 / JCM 1131 / KCTC 3163 / NCIMB 11718 / NCTC 13722 / AM63) protein is Ribose-5-phosphate isomerase A.